The following is a 290-amino-acid chain: Ubiquinone biosynthesis protein COQ4, mitochondrial (290 aa).

The transit peptide at 1–32 (MAKRVCVGDLRKLAGSVSTPSRCILPPHARCF) directs the protein to the mitochondrion. Zn(2+) contacts are provided by His-168, Asp-169, His-172, and Glu-184. The disordered stretch occupies residues 260–290 (KPPDLREMRKAEREAQKKDKEAKETMTRAAV).

The protein belongs to the COQ4 family. As to quaternary structure, component of a multi-subunit COQ enzyme complex, composed of at least COQ3, COQ4, COQ5, COQ6, COQ7 and COQ9. The cofactor is Zn(2+).

Its subcellular location is the mitochondrion inner membrane. The enzyme catalyses a 4-hydroxy-3-methoxy-5-(all-trans-polyprenyl)benzoate + H(+) = a 2-methoxy-6-(all-trans-polyprenyl)phenol + CO2. Its pathway is cofactor biosynthesis; ubiquinone biosynthesis. Its function is as follows. Lyase that catalyzes the C1-decarboxylation of 4-hydroxy-3-methoxy-5-(all-trans-polyprenyl)benzoic acid into 2-methoxy-6-(all-trans-polyprenyl)phenol during ubiquinone biosynthesis. The polypeptide is Ubiquinone biosynthesis protein COQ4, mitochondrial (Phaeosphaeria nodorum (strain SN15 / ATCC MYA-4574 / FGSC 10173) (Glume blotch fungus)).